The chain runs to 82 residues: Small ribosomal subunit protein bS18 (82 aa).

Residues 1-20 (MSEASSAPVRRPFHRRRKTC) form a disordered region.

The protein belongs to the bacterial ribosomal protein bS18 family. Part of the 30S ribosomal subunit. Forms a tight heterodimer with protein bS6.

Its function is as follows. Binds as a heterodimer with protein bS6 to the central domain of the 16S rRNA, where it helps stabilize the platform of the 30S subunit. This chain is Small ribosomal subunit protein bS18, found in Rhizobium etli (strain CIAT 652).